The following is a 95-amino-acid chain: Aspartyl/glutamyl-tRNA(Asn/Gln) amidotransferase subunit C (95 aa).

This sequence belongs to the GatC family. In terms of assembly, heterotrimer of A, B and C subunits.

It carries out the reaction L-glutamyl-tRNA(Gln) + L-glutamine + ATP + H2O = L-glutaminyl-tRNA(Gln) + L-glutamate + ADP + phosphate + H(+). The catalysed reaction is L-aspartyl-tRNA(Asn) + L-glutamine + ATP + H2O = L-asparaginyl-tRNA(Asn) + L-glutamate + ADP + phosphate + 2 H(+). Its function is as follows. Allows the formation of correctly charged Asn-tRNA(Asn) or Gln-tRNA(Gln) through the transamidation of misacylated Asp-tRNA(Asn) or Glu-tRNA(Gln) in organisms which lack either or both of asparaginyl-tRNA or glutaminyl-tRNA synthetases. The reaction takes place in the presence of glutamine and ATP through an activated phospho-Asp-tRNA(Asn) or phospho-Glu-tRNA(Gln). This Dehalococcoides mccartyi (strain ATCC BAA-2266 / KCTC 15142 / 195) (Dehalococcoides ethenogenes (strain 195)) protein is Aspartyl/glutamyl-tRNA(Asn/Gln) amidotransferase subunit C.